The following is a 719-amino-acid chain: Protein lin-15A (719 aa).

Disordered stretches follow at residues 179–199 (FSHF…EGSQ), 419–464 (YRDH…SISW), 559–626 (LTTA…PTKT), and 684–719 (AKQV…EPIF). Residues 570–579 (STSTDSSSSS) show a composition bias toward low complexity. Positions 604 to 617 (LLQNKPTHVESSSP) are enriched in polar residues. The span at 693–719 (EPKHIPPTHMEKKPEELLMDPKPEPIF) shows a compositional bias: basic and acidic residues.

It localises to the nucleus. Its function is as follows. Synthetic multivulva (synMuv) class A protein. SynMuv proteins are required to repress the induction of vulval development. Acts redundantly with SynMuv class B protein lin-15B, and lin-35 to negatively regulate vulval development, most likely through antagonization of the Ras-signaling pathway. May also negatively regulate vulval development in association with other SynMuv class B proteins such as dpl-1 and efl-1. Regulates let-23 basal activity. Required for the correct expression and/or stability of lin-56. In Caenorhabditis elegans, this protein is Protein lin-15A.